A 198-amino-acid chain; its full sequence is Recombination protein RecR (198 aa).

The segment at 58–73 (CSVCNNLTEKDPCDFC) adopts a C4-type zinc-finger fold. Residues 81-175 (NLICVVESPK…KVTRIAHGLP (95 aa)) enclose the Toprim domain.

It belongs to the RecR family.

Functionally, may play a role in DNA repair. It seems to be involved in an RecBC-independent recombinational process of DNA repair. It may act with RecF and RecO. This is Recombination protein RecR from Halothermothrix orenii (strain H 168 / OCM 544 / DSM 9562).